Here is a 381-residue protein sequence, read N- to C-terminus: Creatine kinase M-type (381 aa).

The Phosphagen kinase N-terminal domain occupies 11-98 (KLNFKAEEEY…FDPIIQDRHG (88 aa)). One can recognise a Phosphagen kinase C-terminal domain in the interval 125-367 (YVLSSRVRTG…KLMVEMEKKL (243 aa)). ATP is bound at residue 128-132 (SSRVR). Position 164 is a phosphoserine (Ser164). Thr166 carries the post-translational modification Phosphothreonine. A Phosphoserine modification is found at Ser178. The residue at position 180 (Thr180) is a Phosphothreonine. Residue His191 participates in ATP binding. Phosphoserine is present on Ser199. ATP contacts are provided by Arg236 and Arg292. Phosphothreonine is present on residues Thr313 and Thr322. ATP contacts are provided by residues 320 to 325 (RGTGGV) and Asp335. Phosphoserine is present on Ser372.

The protein belongs to the ATP:guanido phosphotransferase family. As to quaternary structure, dimer of identical or non-identical chains, which can be either B (brain type) or M (muscle type). With MM being the major form in skeletal muscle and myocardium, MB existing in myocardium, and BB existing in many tissues, especially brain.

The catalysed reaction is creatine + ATP = N-phosphocreatine + ADP + H(+). Reversibly catalyzes the transfer of phosphate between ATP and various phosphogens (e.g. creatine phosphate). Creatine kinase isoenzymes play a central role in energy transduction in tissues with large, fluctuating energy demands, such as skeletal muscle, heart, brain and spermatozoa. In Sus scrofa (Pig), this protein is Creatine kinase M-type (CKM).